A 110-amino-acid polypeptide reads, in one-letter code: Hydrogenase maturation factor HypA (110 aa).

H2 contacts Ni(2+). Positions 70, 73, 86, and 89 each coordinate Zn(2+).

Belongs to the HypA/HybF family.

Involved in the maturation of [NiFe] hydrogenases. Required for nickel insertion into the metal center of the hydrogenase. The chain is Hydrogenase maturation factor HypA from Geotalea daltonii (strain DSM 22248 / JCM 15807 / FRC-32) (Geobacter daltonii).